The sequence spans 237 residues: Large ribosomal subunit protein uL1 (237 aa).

It belongs to the universal ribosomal protein uL1 family. As to quaternary structure, part of the 50S ribosomal subunit.

Binds directly to 23S rRNA. The L1 stalk is quite mobile in the ribosome, and is involved in E site tRNA release. In terms of biological role, protein L1 is also a translational repressor protein, it controls the translation of the L11 operon by binding to its mRNA. The protein is Large ribosomal subunit protein uL1 of Thermosynechococcus vestitus (strain NIES-2133 / IAM M-273 / BP-1).